The chain runs to 278 residues: ATP synthase subunit delta (278 aa).

Belongs to the ATPase delta chain family. As to quaternary structure, F-type ATPases have 2 components, F(1) - the catalytic core - and F(0) - the membrane proton channel. F(1) has five subunits: alpha(3), beta(3), gamma(1), delta(1), epsilon(1). F(0) has three main subunits: a(1), b(2) and c(10-14). The alpha and beta chains form an alternating ring which encloses part of the gamma chain. F(1) is attached to F(0) by a central stalk formed by the gamma and epsilon chains, while a peripheral stalk is formed by the delta and b chains.

The protein localises to the cell membrane. Its function is as follows. F(1)F(0) ATP synthase produces ATP from ADP in the presence of a proton or sodium gradient. F-type ATPases consist of two structural domains, F(1) containing the extramembraneous catalytic core and F(0) containing the membrane proton channel, linked together by a central stalk and a peripheral stalk. During catalysis, ATP synthesis in the catalytic domain of F(1) is coupled via a rotary mechanism of the central stalk subunits to proton translocation. In terms of biological role, this protein is part of the stalk that links CF(0) to CF(1). It either transmits conformational changes from CF(0) to CF(1) or is implicated in proton conduction. The chain is ATP synthase subunit delta from Bifidobacterium longum (strain DJO10A).